A 764-amino-acid chain; its full sequence is 5-methyltetrahydropteroyltriglutamate--homocysteine methyltransferase (764 aa).

Residues Arg-16 to Lys-19 and Lys-112 each bind 5-methyltetrahydropteroyltri-L-glutamate. L-homocysteine is bound by residues Ile-431 to Ser-433 and Glu-484. Residues Ile-431–Ser-433 and Glu-484 contribute to the L-methionine site. Residues Arg-515–Cys-516 and Trp-561 contribute to the 5-methyltetrahydropteroyltri-L-glutamate site. Residue Asp-599 coordinates L-homocysteine. L-methionine is bound at residue Asp-599. Residue Glu-605 participates in 5-methyltetrahydropteroyltri-L-glutamate binding. Zn(2+) contacts are provided by His-641, Cys-643, and Glu-665. His-694 acts as the Proton donor in catalysis. Zn(2+) is bound at residue Cys-726.

Belongs to the vitamin-B12 independent methionine synthase family. Zn(2+) serves as cofactor.

It catalyses the reaction 5-methyltetrahydropteroyltri-L-glutamate + L-homocysteine = tetrahydropteroyltri-L-glutamate + L-methionine. The protein operates within amino-acid biosynthesis; L-methionine biosynthesis via de novo pathway; L-methionine from L-homocysteine (MetE route): step 1/1. Functionally, catalyzes the transfer of a methyl group from 5-methyltetrahydrofolate to homocysteine resulting in methionine formation. This Paraburkholderia xenovorans (strain LB400) protein is 5-methyltetrahydropteroyltriglutamate--homocysteine methyltransferase.